The primary structure comprises 96 residues: Auxin-responsive protein SAUR29 (96 aa).

Belongs to the ARG7 family.

It localises to the cell membrane. Functions as a positive effector of cell expansion through modulation of auxin transport. Involved in thermo-responsiveness of plant architecture. Enhances plasma membrane H(+)-ATPase. The polypeptide is Auxin-responsive protein SAUR29 (Arabidopsis thaliana (Mouse-ear cress)).